The chain runs to 557 residues: Potassium-transporting ATPase potassium-binding subunit (557 aa).

The next 12 membrane-spanning stretches (helical) occupy residues 5–25 (GFLL…PLGS), 63–83 (LSAI…MLLG), 132–152 (GLTV…FALI), 170–190 (LLRI…LFFI), 253–273 (FVQM…FGEV), 283–303 (LLWA…WAEV), 329–349 (VLVS…AVIA), 356–376 (ALGG…FGGV), 379–399 (GLYG…LMIG), 416–436 (LTAL…ALAM), 484–504 (LLAL…MAIA), and 526–546 (LFVG…FIPA).

The protein belongs to the KdpA family. As to quaternary structure, the system is composed of three essential subunits: KdpA, KdpB and KdpC.

The protein localises to the cell inner membrane. Part of the high-affinity ATP-driven potassium transport (or Kdp) system, which catalyzes the hydrolysis of ATP coupled with the electrogenic transport of potassium into the cytoplasm. This subunit binds the periplasmic potassium ions and delivers the ions to the membrane domain of KdpB through an intramembrane tunnel. In Escherichia coli O127:H6 (strain E2348/69 / EPEC), this protein is Potassium-transporting ATPase potassium-binding subunit.